A 131-amino-acid polypeptide reads, in one-letter code: Hypocretin neuropeptide precursor (131 aa).

The first 33 residues, 1 to 33 (MNLPSTKVSWAAVTLLLLLLLLPPALLSSGAAA), serve as a signal peptide directing secretion. The residue at position 34 (Q34) is a Pyrrolidone carboxylic acid. 2 disulfide bridges follow: C39–C45 and C40–C47. L66 carries the post-translational modification Leucine amide. Position 97 is a methionine amide (M97). The propeptide at 98–131 (GRRAGAEPAPRPCLGRRCSAPAAASVAPGGQSGI) is removed in mature form.

It belongs to the orexin family. In terms of processing, specific enzymatic cleavages at paired basic residues yield the different active peptides. In terms of tissue distribution, abundantly expressed in subthalamic nucleus but undetectable in other brain regions tested (hypothalamus was not tested) and in heart, placenta, lung, liver, skeletal muscle, kidney and pancreas.

It localises to the rough endoplasmic reticulum. Its subcellular location is the cytoplasmic vesicle. The protein localises to the synapse. Neuropeptides that play a significant role in the regulation of food intake and sleep-wakefulness, possibly by coordinating the complex behavioral and physiologic responses of these complementary homeostatic functions. A broader role in the homeostatic regulation of energy metabolism, autonomic function, hormonal balance and the regulation of body fluids, is also suggested. Its function is as follows. Binds to orexin receptors HCRTR1/OX1R and HCRTR2/OX2R with a high affinity. Stimulates food intake. Modulates pituitary luteinizing hormone secretion in an ovarian steroid-dependent manner. In terms of biological role, binds to orexin receptor HCRTR2/OX2R only. Stimulates food intake. Modulates pituitary luteinizing hormone secretion in an ovarian steroid-dependent manner. This Homo sapiens (Human) protein is Hypocretin neuropeptide precursor.